The sequence spans 575 residues: Transcription factor ncaA (575 aa).

Polar residues-rich tracts occupy residues Met-1–Asn-15 and Asp-22–Pro-34. 2 disordered regions span residues Met-1 to Arg-40 and Ile-79 to Glu-114. A UBZ4-type; degenerate zinc finger spans residues Asp-39–Lys-66. Basic and acidic residues predominate over residues Gly-93–Met-102. The stretch at Phe-337–Cys-371 forms a coiled coil. Positions Gly-429–Ala-575 are disordered. Positions Leu-440–Glu-454 are enriched in basic and acidic residues. The span at Glu-455–Pro-471 shows a compositional bias: low complexity. Residues Ser-472–Gly-485 show a composition bias toward pro residues. 2 stretches are compositionally biased toward polar residues: residues Asp-493–Tyr-513 and Ser-538–Leu-558.

Interacts with atrR.

The protein localises to the nucleus. Transcription factor required for normal voriconazole resistance. Contributes to the function of atrR and regulates the expression of the atrR target gene abcG1. The protein is Transcription factor ncaA of Aspergillus fumigatus (strain ATCC MYA-4609 / CBS 101355 / FGSC A1100 / Af293) (Neosartorya fumigata).